Here is a 479-residue protein sequence, read N- to C-terminus: PTS system MurNAc-GlcNAc-specific EIIBC component (479 aa).

Residues 5–87 (QILAEHIIDA…SELSGAPLGE (83 aa)) form the PTS EIIB type-1 domain. Cysteine 27 functions as the Phosphocysteine intermediate; for EIIB activity in the catalytic mechanism. The PTS EIIC type-1 domain maps to 125 to 479 (KTIANIFIPL…AMRESDTLGD (355 aa)). The next 10 membrane-spanning stretches (helical) occupy residues 130–150 (IFIP…IAAV), 169–189 (VTVF…FTGI), 195–215 (FGAT…TGLT), 229–249 (LQPG…LSII), 269–289 (ITLF…AGFV), 303–323 (IGGV…VMLG), 344–364 (LLPI…ALWV), 379–399 (ALPV…TLPL), 403–423 (FITA…IGHI), and 445–465 (LGYI…TYFF).

Its subcellular location is the cell membrane. The catalysed reaction is N-acetyl-beta-D-muramate-(1-&gt;4)-N-acetyl-D-glucosamine(out) + N(pros)-phospho-L-histidyl-[protein] = 6-phospho-N-acetyl-beta-D-muramate-(1-&gt;4)-N-acetyl-D-glucosamine(in) + L-histidyl-[protein]. Its pathway is cell wall biogenesis; peptidoglycan recycling. Functionally, the phosphoenolpyruvate-dependent sugar phosphotransferase system (sugar PTS), a major carbohydrate active transport system, catalyzes the phosphorylation of incoming sugar substrates concomitantly with their translocation across the cell membrane. This system is involved in the uptake and phosphorylation of MurNAc-GlcNAc, the principle peptidoglycan turnover product of S.aureus, yielding cytoplasmic MurNAc 6P-GlcNAc. This is PTS system MurNAc-GlcNAc-specific EIIBC component from Staphylococcus saprophyticus subsp. saprophyticus (strain ATCC 15305 / DSM 20229 / NCIMB 8711 / NCTC 7292 / S-41).